A 929-amino-acid polypeptide reads, in one-letter code: von Willebrand factor C and EGF domain-containing protein (929 aa).

A signal peptide spans 1–21; the sequence is MWARLLLHVAYILIPLLGSSA. Residues 70-98 form the EGF-like 1 domain; sequence LCSFGCGSGICIAPNVCSCQDGEQGATCP. Residues 142–180 enclose the EGF-like 2; calcium-binding domain; it reads DIDECLSSSCEGHCVNTEGGFVCECGPGMQLSADRHSCQ. Disulfide bonds link Cys-146/Cys-155, Cys-151/Cys-164, Cys-166/Cys-179, Cys-185/Cys-194, Cys-190/Cys-203, Cys-205/Cys-218, Cys-224/Cys-237, Cys-233/Cys-246, and Cys-248/Cys-261. An EGF-like 3; calcium-binding domain is found at 181–219; the sequence is DTDECLGTPCQQRCKNSIGSYKCSCRAGFHLHGNRHSCI. The 43-residue stretch at 220–262 folds into the EGF-like 4; calcium-binding domain; the sequence is DVNECRRPQERRVCHHTCHNTVGSFLCTCRPGFRLRSDRVSCE. Disordered stretches follow at residues 291 to 317 and 339 to 374; these read AGRP…RTIS and PSSS…LGAG. The segment covering 339 to 353 has biased composition (low complexity); sequence PSSSPLGTLGPPSLL. VWFC domains are found at residues 376 to 433, 433 to 494, 491 to 552, 558 to 618, 619 to 677, and 677 to 762; these read SSCW…PSCT, TGCF…GRCY, GRCY…FTCR, TGCS…PDCS, AGCT…PVCH, and HDCN…VNCS. N-linked (GlcNAc...) asparagine glycosylation is found at Asn-454 and Asn-464. A disordered region spans residues 731 to 774; that stretch reads PLEEKQQPSPHGELAKAARNARGDTEVPVNCSSCPGPPSASPTR. Basic and acidic residues predominate over residues 743 to 755; it reads ELAKAARNARGDT. N-linked (GlcNAc...) asparagine glycosylation is present at Asn-787. The span at 791-807 shows a compositional bias: polar residues; it reads IQSASPSPPIAQTSSSP. Disordered stretches follow at residues 791 to 861 and 879 to 929; these read IQSA…SSTF and AETP…NSTI. Positions 889–903 are enriched in low complexity; that stretch reads LSETLTTSSSSQRLS.

It localises to the secreted. Functionally, may be a regulatory element in the beta-catenin signaling pathway and a target for chemoprevention of hapatocellular carcinoma. The sequence is that of von Willebrand factor C and EGF domain-containing protein (Vwce) from Mus musculus (Mouse).